Reading from the N-terminus, the 466-residue chain is 5-hydroxytryptamine receptor (466 aa).

The tract at residues 1 to 21 (MNASRLPGFNDTSQDQPYPTS) is disordered. Residues 1-66 (MNASRLPGFN…TSFVLMAVTS (66 aa)) lie on the Extracellular side of the membrane. Residues Asn-2, Asn-10, Asn-29, Asn-41, Asn-45, and Asn-50 are each glycosylated (N-linked (GlcNAc...) asparagine). A compositionally biased stretch (polar residues) spans 10 to 21 (NDTSQDQPYPTS). A helical membrane pass occupies residues 67 to 89 (VVLALIILATIVGNVFVIAAIII). The Cytoplasmic portion of the chain corresponds to 90-99 (ERNLQNVANY). A helical transmembrane segment spans residues 100 to 121 (LVASLAVADLMVACLVMPLGAV). Over 122–136 (YEVSQGWILGPELCD) the chain is Extracellular. The cysteines at positions 135 and 215 are disulfide-linked. Residues 137–158 (MWTSSDVLCSSASILHLVAIAT) traverse the membrane as a helical segment. The Cytoplasmic segment spans residues 159-177 (DRYWAVTDVDYIHIRNEKR). Residues 178-200 (IFTMIVLVWGAALVVSLAPQLGW) form a helical membrane-spanning segment. Residues 201-228 (KDPDYLARITQQQKCLVSQDLAYQIFAT) lie on the Extracellular side of the membrane. A helical transmembrane segment spans residues 229 to 250 (MSTFYVPLAVILILYWKIFQTA). The Cytoplasmic segment spans residues 251-386 (RRRIRRRRDP…AKRERKAAKT (136 aa)). 2 disordered regions span residues 255–282 (RRRR…QSAR) and 339–360 (VPPS…KPER). Positions 339–353 (VPPSVSPEKSSSTVT) are enriched in low complexity. A helical membrane pass occupies residues 387 to 410 (LAIITGAFVFCWLPFFIMALVMPI). The Extracellular segment spans residues 411 to 419 (CQTCVISDY). A helical membrane pass occupies residues 420–442 (LASFFLWLGYFNSTLNPVIYTIF). The Cytoplasmic segment spans residues 443–466 (SPDFRQAFARILFGTHRRRRYKKF).

It belongs to the G-protein coupled receptor 1 family.

The protein resides in the cell membrane. Its function is as follows. This is a receptor for 5-hydroxytryptamine (serotonin), a biogenic hormone that function as a neurotransmitter, a hormone, and a mitogen. The chain is 5-hydroxytryptamine receptor from Heliothis virescens (Tobacco budworm moth).